Reading from the N-terminus, the 62-residue chain is MLLIFQLALFAFIVVSFLLVVGVPVVLATPEGWAENKSTVFSGIGIWFLLVFLVGILNSFVV.

Helical transmembrane passes span 8-28 and 41-61; these read ALFA…VVLA and FSGI…NSFV.

It belongs to the PsbZ family. As to quaternary structure, PSII is composed of 1 copy each of membrane proteins PsbA, PsbB, PsbC, PsbD, PsbE, PsbF, PsbH, PsbI, PsbJ, PsbK, PsbL, PsbM, PsbT, PsbY, PsbZ, Psb30/Ycf12, at least 3 peripheral proteins of the oxygen-evolving complex and a large number of cofactors. It forms dimeric complexes.

The protein localises to the plastid. It is found in the chloroplast thylakoid membrane. May control the interaction of photosystem II (PSII) cores with the light-harvesting antenna, regulates electron flow through the 2 photosystem reaction centers. PSII is a light-driven water plastoquinone oxidoreductase, using light energy to abstract electrons from H(2)O, generating a proton gradient subsequently used for ATP formation. This chain is Photosystem II reaction center protein Z, found in Chlorella vulgaris (Green alga).